The following is a 40-amino-acid chain: Muscarinic m1-toxin4 (40 aa).

The cysteines at positions 3 and 24 are disulfide-linked.

The protein belongs to the three-finger toxin family. Short-chain subfamily. Aminergic toxin sub-subfamily. As to quaternary structure, monomer. In terms of processing, contains 4 disulfide bonds. Expressed by the venom gland.

The protein localises to the secreted. Functionally, binds irreversibly and specifically to M1 (CHRM1) muscarinic acetylcholine receptors, blocking further binding of antagonists and preventing the action of agonists. The sequence is that of Muscarinic m1-toxin4 from Dendroaspis angusticeps (Eastern green mamba).